The primary structure comprises 264 residues: S-adenosylmethionine decarboxylase proenzyme (264 aa).

Ser-113 (schiff-base intermediate with substrate; via pyruvic acid) is an active-site residue. The residue at position 113 (Ser-113) is a Pyruvic acid (Ser); by autocatalysis. His-118 acts as the Proton acceptor; for processing activity in catalysis. The active-site Proton donor; for catalytic activity is Cys-141.

Belongs to the prokaryotic AdoMetDC family. Type 2 subfamily. As to quaternary structure, heterooctamer of four alpha and four beta chains arranged as a tetramer of alpha/beta heterodimers. It depends on pyruvate as a cofactor. Is synthesized initially as an inactive proenzyme. Formation of the active enzyme involves a self-maturation process in which the active site pyruvoyl group is generated from an internal serine residue via an autocatalytic post-translational modification. Two non-identical subunits are generated from the proenzyme in this reaction, and the pyruvate is formed at the N-terminus of the alpha chain, which is derived from the carboxyl end of the proenzyme. The post-translation cleavage follows an unusual pathway, termed non-hydrolytic serinolysis, in which the side chain hydroxyl group of the serine supplies its oxygen atom to form the C-terminus of the beta chain, while the remainder of the serine residue undergoes an oxidative deamination to produce ammonia and the pyruvoyl group blocking the N-terminus of the alpha chain.

The enzyme catalyses S-adenosyl-L-methionine + H(+) = S-adenosyl 3-(methylsulfanyl)propylamine + CO2. The protein operates within amine and polyamine biosynthesis; S-adenosylmethioninamine biosynthesis; S-adenosylmethioninamine from S-adenosyl-L-methionine: step 1/1. Functionally, catalyzes the decarboxylation of S-adenosylmethionine to S-adenosylmethioninamine (dcAdoMet), the propylamine donor required for the synthesis of the polyamines spermine and spermidine from the diamine putrescine. The polypeptide is S-adenosylmethionine decarboxylase proenzyme (Azotobacter vinelandii (strain DJ / ATCC BAA-1303)).